A 566-amino-acid polypeptide reads, in one-letter code: Probable F-box protein At5g39490 (566 aa).

The region spanning 8–54 (ACLLLMLPEDIFVVISRFLSPSDICNLILCGKSLRALVDSEKTWLVQ) is the F-box domain. Positions 318-338 (LRKSSSSKNTTPSQSEIRHSN) are disordered. Residues 320–332 (KSSSSKNTTPSQS) show a composition bias toward low complexity.

The polypeptide is Probable F-box protein At5g39490 (Arabidopsis thaliana (Mouse-ear cress)).